Here is a 692-residue protein sequence, read N- to C-terminus: Elongation factor G (692 aa).

The 275-residue stretch at 8–282 (ERTRNIGIMA…AIVYYLPSPV (275 aa)) folds into the tr-type G domain. GTP contacts are provided by residues 17–24 (AHIDAGKT), 81–85 (DTPGH), and 135–138 (NKMD).

It belongs to the TRAFAC class translation factor GTPase superfamily. Classic translation factor GTPase family. EF-G/EF-2 subfamily.

It is found in the cytoplasm. Functionally, catalyzes the GTP-dependent ribosomal translocation step during translation elongation. During this step, the ribosome changes from the pre-translocational (PRE) to the post-translocational (POST) state as the newly formed A-site-bound peptidyl-tRNA and P-site-bound deacylated tRNA move to the P and E sites, respectively. Catalyzes the coordinated movement of the two tRNA molecules, the mRNA and conformational changes in the ribosome. The sequence is that of Elongation factor G from Carboxydothermus hydrogenoformans (strain ATCC BAA-161 / DSM 6008 / Z-2901).